The primary structure comprises 179 residues: Large ribosomal subunit protein uL6 (179 aa).

Belongs to the universal ribosomal protein uL6 family. Part of the 50S ribosomal subunit.

Its function is as follows. This protein binds to the 23S rRNA, and is important in its secondary structure. It is located near the subunit interface in the base of the L7/L12 stalk, and near the tRNA binding site of the peptidyltransferase center. The polypeptide is Large ribosomal subunit protein uL6 (Rhodococcus opacus (strain B4)).